The chain runs to 387 residues: Protein salvador homolog 1 (387 aa).

A phosphoserine mark is found at Ser95 and Ser138. 2 consecutive WW domains span residues 201–234 and 236–269; these read LPLPPGWSVDWTMRGRKYYIDHNTNTTHWSHPLE and EGLPPGWERVESSEFGTYYVDHTNKRAQYRHPCA. Thr212 is subject to Phosphothreonine. The 48-residue stretch at 323 to 370 folds into the SARAH domain; it reads ILKWELFQLADLDTYQGMLKLLFMKELEQIVKLYEAYRQALVTELENR.

As to quaternary structure, homodimer. Stabilized through interaction with STK3/MST2 or STK4/MST1. Interacts (via SARAH domain) with isoform 1 of NEK2. Interacts with ESR1 only in the presence of STK3/MST2. Interacts with WTIP and AJUBA. Phosphorylated by STK3/MST2 and STK4/MST1. Phosphorylation is not required for SAV1 stability and may increase the number of protein binding sites on the scaffold molecule.

The protein localises to the nucleus. It localises to the cytoplasm. In terms of biological role, regulator of STK3/MST2 and STK4/MST1 in the Hippo signaling pathway which plays a pivotal role in organ size control and tumor suppression by restricting proliferation and promoting apoptosis. The core of this pathway is composed of a kinase cascade wherein STK3/MST2 and STK4/MST1, in complex with its regulatory protein SAV1, phosphorylates and activates LATS1/2 in complex with its regulatory protein MOB1, which in turn phosphorylates and inactivates YAP1 oncoprotein and WWTR1/TAZ. Phosphorylation of YAP1 by LATS1/2 inhibits its translocation into the nucleus to regulate cellular genes important for cell proliferation, cell death, and cell migration. SAV1 is required for STK3/MST2 and STK4/MST1 activation and promotes cell-cycle exit and terminal differentiation in developing epithelial tissues. Plays a role in centrosome disjunction by regulating the localization of NEK2 to centrosomes, and its ability to phosphorylate CROCC and CEP250. In conjunction with STK3/MST2, activates the transcriptional activity of ESR1 through the modulation of its phosphorylation. The sequence is that of Protein salvador homolog 1 from Rattus norvegicus (Rat).